Reading from the N-terminus, the 647-residue chain is Versicolorin B synthase (647 aa).

Residues 1 to 26 (MALSTILTAAAMPVAGLFAFAQQSSA) form the signal peptide. Residues 85 to 86 (TA) and 106 to 107 (EA) each bind FAD. N-linked (GlcNAc...) asparagine glycosylation is present at Asn-117. 172–175 (GAML) lines the FAD pocket. Residues Asn-222 and Asn-509 are each glycosylated (N-linked (GlcNAc...) asparagine). Residues Ala-617 and 628–629 (PM) each bind FAD.

It belongs to the GMC oxidoreductase family. In terms of assembly, homodimer. FAD serves as cofactor.

It localises to the cytoplasm. It is found in the cytosol. It carries out the reaction (2S-3S)-versiconal hemiacetal = versicolorin B + H2O. It catalyses the reaction (S)-5'-oxoaverantin + H(+) = (1'S,5'S)-averufin + H2O. It participates in mycotoxin biosynthesis. Its function is as follows. Versicolorin B synthase; part of the fragmented gene cluster that mediates the biosynthesis of dothistromin (DOTH), a polyketide toxin very similar in structure to the aflatoxin precursor, versicolorin B. The first step of the pathway is the conversion of acetate to norsolorinic acid (NOR) and requires the fatty acid synthase subunits hexA and hexB, as well as the polyketide synthase pksA. PksA combines a hexanoyl starter unit and 7 malonyl-CoA extender units to synthesize the precursor NOR. The hexanoyl starter unit is provided to the acyl-carrier protein (ACP) domain by the fungal fatty acid synthase hexA/hexB. The second step is the conversion of NOR to averantin (AVN) and requires the norsolorinic acid ketoreductase nor1, which catalyzes the dehydration of norsolorinic acid to form (1'S)-averantin. The cytochrome P450 monooxygenase avnA then catalyzes the hydroxylation of AVN to 5'hydroxyaverantin (HAVN). The next step is performed by adhA that transforms HAVN to averufin (AVF). Averufin might then be converted to hydroxyversicolorone by cypX and avfA. Hydroxyversicolorone is further converted versiconal hemiacetal acetate (VHA) by moxY. VHA is then the substrate for the versiconal hemiacetal acetate esterase est1 to yield versiconal (VAL). Versicolorin B synthase vbsA then converts VAL to versicolorin B (VERB) by closing the bisfuran ring. Then, the activity of the versicolorin B desaturase verB leads to versicolorin A (VERA). DotB, a predicted chloroperoxidase, may perform epoxidation of the A-ring of VERA. Alternatively, a cytochrome P450, such as cypX or avnA could catalyze this step. It is also possible that another, uncharacterized, cytochrome P450 enzyme is responsible for this step. Opening of the epoxide could potentially be achieved by the epoxide hydrolase epoA. However, epoA seems not to be required for DOTH biosynthesis, but other epoxide hydrolases may have the ability to complement this hydrolysis. Alternatively, opening of the epoxide ring could be achieved non-enzymatically. The next step is the deoxygenation of ring A to yield the 5,8-dihydroxyanthraquinone which is most likely catalyzed by the NADPH dehydrogenase encoded by ver1. The last stages of DOTH biosynthesis are proposed to involve hydroxylation of the bisfuran. OrdB and norB might have oxidative roles here. An alternative possibility is that cytochrome P450 monoogenases such as avnA and cypX might perform these steps in addition to previously proposed steps. The sequence is that of Versicolorin B synthase from Dothistroma septosporum (Red band needle blight fungus).